Reading from the N-terminus, the 62-residue chain is UPF0434 protein SPO3421 (62 aa).

It belongs to the UPF0434 family.

In Ruegeria pomeroyi (strain ATCC 700808 / DSM 15171 / DSS-3) (Silicibacter pomeroyi), this protein is UPF0434 protein SPO3421.